The chain runs to 359 residues: Photosystem II protein D1 1 (359 aa).

The next 3 helical transmembrane spans lie at 29–46 (YVGWFGVLMIPTLLAATT), 118–133 (HFLIGIFCYMGREWEL), and 142–156 (WICVAYSAPVAAASA). His-118 is a binding site for chlorophyll a. Tyr-126 provides a ligand contact to pheophytin a. The [CaMn4O5] cluster site is built by Asp-170 and Glu-189. Residues 197–218 (FHMMGVAGVFGGSLFSAMHGSL) traverse the membrane as a helical segment. Chlorophyll a is bound at residue His-198. Residues His-215 and 264–265 (SF) each bind a quinone. Residue His-215 coordinates Fe cation. Residue His-272 coordinates Fe cation. A helical membrane pass occupies residues 274–288 (FLAAWPVVGIWFTAL). 4 residues coordinate [CaMn4O5] cluster: His-332, Glu-333, Asp-342, and Ala-344. The propeptide occupies 345–359 (AAESTPVALQAPAIG).

The protein belongs to the reaction center PufL/M/PsbA/D family. As to quaternary structure, PSII is composed of 1 copy each of membrane proteins PsbA, PsbB, PsbC, PsbD, PsbE, PsbF, PsbH, PsbI, PsbJ, PsbK, PsbL, PsbM, PsbT, PsbX, PsbY, PsbZ, Psb30/Ycf12, peripheral proteins PsbO, CyanoQ (PsbQ), PsbU, PsbV and a large number of cofactors. It forms dimeric complexes. Requires The D1/D2 heterodimer binds P680, chlorophylls that are the primary electron donor of PSII, and subsequent electron acceptors. It shares a non-heme iron and each subunit binds pheophytin, quinone, additional chlorophylls, carotenoids and lipids. D1 provides most of the ligands for the Mn4-Ca-O5 cluster of the oxygen-evolving complex (OEC). There is also a Cl(-1) ion associated with D1 and D2, which is required for oxygen evolution. The PSII complex binds additional chlorophylls, carotenoids and specific lipids. as cofactor. Post-translationally, tyr-161 forms a radical intermediate that is referred to as redox-active TyrZ, YZ or Y-Z. C-terminally processed by CtpA; processing is essential to allow assembly of the oxygen-evolving complex and thus photosynthetic growth.

It localises to the cellular thylakoid membrane. The enzyme catalyses 2 a plastoquinone + 4 hnu + 2 H2O = 2 a plastoquinol + O2. Functionally, photosystem II (PSII) is a light-driven water:plastoquinone oxidoreductase that uses light energy to abstract electrons from H(2)O, generating O(2) and a proton gradient subsequently used for ATP formation. It consists of a core antenna complex that captures photons, and an electron transfer chain that converts photonic excitation into a charge separation. The D1/D2 (PsbA/PsbD) reaction center heterodimer binds P680, the primary electron donor of PSII as well as several subsequent electron acceptors. In Synechococcus sp. (strain WH7803), this protein is Photosystem II protein D1 1.